The chain runs to 926 residues: Periplasmic nitrate reductase (926 aa).

The segment at residues 1 to 30 (MNRRDFIKSAAASAACASAGIAIPANLSAA) is a signal peptide (tat-type signal). Residues 37–93 (WRWDKAACRFCGTGCGIMVATKEGKIVAVKGDPEAPVNRGLNCIKGYFNAKIMYGED) enclose the 4Fe-4S Mo/W bis-MGD-type domain. [4Fe-4S] cluster contacts are provided by Cys-44, Cys-47, Cys-51, and Cys-79. Residues Lys-81, Gln-149, Asn-174, Cys-178, 211 to 218 (WGANMAEM), Met-419, Gln-423, Asn-529, 554 to 555 (SD), Lys-577, Asp-604, and 816 to 825 (TGRVLEHWHS) contribute to the Mo-bis(molybdopterin guanine dinucleotide) site. Trp-892 contributes to the substrate binding site. Asn-900 and Lys-917 together coordinate Mo-bis(molybdopterin guanine dinucleotide).

Belongs to the prokaryotic molybdopterin-containing oxidoreductase family. NasA/NapA/NarB subfamily. In terms of assembly, component of the periplasmic nitrate reductase NapAB complex composed of NapA and NapB. [4Fe-4S] cluster is required as a cofactor. The cofactor is Mo-bis(molybdopterin guanine dinucleotide). Post-translationally, predicted to be exported by the Tat system. The position of the signal peptide cleavage has not been experimentally proven.

It localises to the periplasm. The enzyme catalyses 2 Fe(II)-[cytochrome] + nitrate + 2 H(+) = 2 Fe(III)-[cytochrome] + nitrite + H2O. Catalytic subunit of the periplasmic nitrate reductase complex NapAB. Receives electrons from NapB and catalyzes the reduction of nitrate to nitrite. The polypeptide is Periplasmic nitrate reductase (Campylobacter curvus (strain 525.92)).